The sequence spans 940 residues: Translation initiation factor IF-2 (940 aa).

Disordered stretches follow at residues 116–137 (PEQE…SSDT), 151–196 (EVEA…EQRS), 210–294 (AVRK…VKKV), and 318–346 (HSAP…VANR). The segment covering 121–137 (LESTSVAEIPESVSSDT) has biased composition (polar residues). Acidic residues predominate over residues 159 to 180 (PEPEVEATPEPEVEDVVAEEAE). Residues 181–193 (PAAAEPAPAPVVE) show a composition bias toward low complexity. Residues 213–239 (KKAEEEAEVARRKADAEKAEAAAKQKA) are compositionally biased toward basic and acidic residues. Positions 282–294 (KHNKKAGKAVKKV) are enriched in basic residues. The span at 326–337 (GGQNNNSSNSGS) shows a compositional bias: low complexity. Positions 441-610 (ARAPVVTVMG…ALQAELLELS (170 aa)) constitute a tr-type G domain. The G1 stretch occupies residues 450–457 (GHVDHGKT). 450 to 457 (GHVDHGKT) contacts GTP. Residues 475–479 (GITQH) form a G2 region. The G3 stretch occupies residues 496-499 (DTPG). Residues 496–500 (DTPGH) and 550–553 (NKID) each bind GTP. Positions 550–553 (NKID) are G4. Residues 586-588 (SAQ) form a G5 region.

Belongs to the TRAFAC class translation factor GTPase superfamily. Classic translation factor GTPase family. IF-2 subfamily.

It is found in the cytoplasm. Its function is as follows. One of the essential components for the initiation of protein synthesis. Protects formylmethionyl-tRNA from spontaneous hydrolysis and promotes its binding to the 30S ribosomal subunits. Also involved in the hydrolysis of GTP during the formation of the 70S ribosomal complex. This Teredinibacter turnerae (strain ATCC 39867 / T7901) protein is Translation initiation factor IF-2.